The following is a 205-amino-acid chain: N-(5'-phosphoribosyl)anthranilate isomerase (205 aa).

Belongs to the TrpF family.

The enzyme catalyses N-(5-phospho-beta-D-ribosyl)anthranilate = 1-(2-carboxyphenylamino)-1-deoxy-D-ribulose 5-phosphate. It functions in the pathway amino-acid biosynthesis; L-tryptophan biosynthesis; L-tryptophan from chorismate: step 3/5. This chain is N-(5'-phosphoribosyl)anthranilate isomerase (TRP1), found in Zygosaccharomyces bailii.